The sequence spans 364 residues: Chorismate synthase (364 aa).

The tract at residues 41–60 is disordered; it reads MQHDLDRRRPGTSRYTTARR. R48 and R54 together coordinate NADP(+). Residues 125 to 127, 238 to 239, G278, 293 to 297, and R319 contribute to the FMN site; these read RSS, NA, and KPTSS.

It belongs to the chorismate synthase family. As to quaternary structure, homotetramer. The cofactor is FMNH2.

It catalyses the reaction 5-O-(1-carboxyvinyl)-3-phosphoshikimate = chorismate + phosphate. The protein operates within metabolic intermediate biosynthesis; chorismate biosynthesis; chorismate from D-erythrose 4-phosphate and phosphoenolpyruvate: step 7/7. In terms of biological role, catalyzes the anti-1,4-elimination of the C-3 phosphate and the C-6 proR hydrogen from 5-enolpyruvylshikimate-3-phosphate (EPSP) to yield chorismate, which is the branch point compound that serves as the starting substrate for the three terminal pathways of aromatic amino acid biosynthesis. This reaction introduces a second double bond into the aromatic ring system. The chain is Chorismate synthase from Shewanella sp. (strain ANA-3).